The following is a 217-amino-acid chain: Somatotropin (217 aa).

The signal sequence occupies residues 1–27; the sequence is MMAAGPRTSLLLAFALLCLPWTQMVGA. H46 contributes to the Zn(2+) binding site. C79 and C190 are joined by a disulfide. S132 bears the Phosphoserine mark. Residue E199 participates in Zn(2+) binding. A disulfide bridge connects residues C207 and C215.

Belongs to the somatotropin/prolactin family.

Its subcellular location is the secreted. Plays an important role in growth control. Its major role in stimulating body growth is to stimulate the liver and other tissues to secrete IGF1. It stimulates both the differentiation and proliferation of myoblasts. It also stimulates amino acid uptake and protein synthesis in muscle and other tissues. This chain is Somatotropin (GH1), found in Giraffa camelopardalis (Giraffe).